A 281-amino-acid chain; its full sequence is Oxidase pynE (281 aa).

Belongs to the avfA family.

It participates in secondary metabolite biosynthesis. Functionally, oxidase; part of the gene cluster that mediates the biosynthesis of pyranonigrins, a family of antioxidative compounds. The first step of pyranonigrins biosynthesis is performed by the hybrid PKS-NRPS synthetase that condenses 6 malonyl-CoA units to an acetyl starter unit, to form a 1,3,5-trioxotetradecane-6,8-dienyl-ACP. The enoyl reductase (ER) domain of pynA is likely to be functional during the first two rounds of polyketide chain extension, to generate the saturated C-C bonds of the alkyl side chain. PynA subsequently forms the amide bond between the acyl chain and L-serine. Although pynA has a terminal reductase domain, it appears to require the thioesterase pynI for the release of the straight-chain intermediate from pynA via the formation of a tetramic acid pyranonigrin J. The methyltransferase pynC then coverts pyranonigrin J to pyranonigrin I via N-methylation. The FAD-dependent monooxygenase pynG catalyzes an epoxidation-mediated cyclization to form the dihydro-gamma-pyrone moiety, followed by pynD-catalyzed oxidation of the alcohol to the ketone and enolization to yield the characteristic tetramic acid-fused gamma-pyrone core of pyranonigrin H. Pyranonigrin H is substrate of pynH for dehydration-mediated exo-methylene formation from the serine side chain to produce pyranonigrin E, before the oxidase pynE reduces the exo-methylene of pyranonigrin E into a pendant methyl to form pyranonigrin G. The FAD-linked oxidoreductase pynB performs the reverse reaction and converts pyranonigrin G back to pyranonigrin E. This chain is Oxidase pynE, found in Aspergillus niger (strain ATCC MYA-4892 / CBS 513.88 / FGSC A1513).